A 148-amino-acid chain; its full sequence is SPbeta prophage-derived uncharacterized protein YomK (148 aa).

The next 2 helical transmembrane spans lie at 72 to 92 (WGIG…LFGV) and 104 to 124 (NALI…RNII).

The protein resides in the cell membrane. This is SPbeta prophage-derived uncharacterized protein YomK (yomK) from Bacillus subtilis (strain 168).